A 298-amino-acid chain; its full sequence is Glutamyl-Q tRNA(Asp) synthetase (298 aa).

Residues 9 to 13 and E45 contribute to the L-glutamate site; that span reads RFAPS. The 'HIGH' region signature appears at 12-22; that stretch reads PSPSGELHFGS. C101, C103, Y115, and C119 together coordinate Zn(2+). L-glutamate contacts are provided by Y172 and R190. Positions 228 to 232 match the 'KMSKS' region motif; it reads KLSKQ. K231 is an ATP binding site.

This sequence belongs to the class-I aminoacyl-tRNA synthetase family. GluQ subfamily. Zn(2+) serves as cofactor.

Its function is as follows. Catalyzes the tRNA-independent activation of glutamate in presence of ATP and the subsequent transfer of glutamate onto a tRNA(Asp). Glutamate is transferred on the 2-amino-5-(4,5-dihydroxy-2-cyclopenten-1-yl) moiety of the queuosine in the wobble position of the QUC anticodon. The sequence is that of Glutamyl-Q tRNA(Asp) synthetase from Citrobacter koseri (strain ATCC BAA-895 / CDC 4225-83 / SGSC4696).